A 917-amino-acid polypeptide reads, in one-letter code: Transcription factor E2F8 (917 aa).

The interval M1–L122 is disordered. 2 stretches are compositionally biased toward polar residues: residues L16–K27 and P37–E48. The segment covering I93–D103 has biased composition (basic and acidic residues). Residues S105–E117 are compositionally biased toward acidic residues. The DNA-binding element occupies R126–G195. Disordered stretches follow at residues Q221–D252, P353–S386, E461–I497, V556–P615, L671–K698, and G813–G834. A compositionally biased stretch (acidic residues) spans E233–D252. Residues R273 to G359 mediate DNA binding. The segment covering I371 to S386 has biased composition (polar residues). Composition is skewed to low complexity over residues S475–S488 and T568–S578. Polar residues predominate over residues E595–M605. Residues V815–S830 show a composition bias toward polar residues.

This sequence belongs to the E2F/DP family. In terms of assembly, homodimer and heterodimer: mainly forms homodimers and, to a lesser extent, heterodimers with e2f7.

Its subcellular location is the nucleus. Functionally, atypical E2F transcription factor that participates in various processes such as angiogenesis and polyploidization of specialized cells. Mainly acts as a transcription repressor that binds DNA independently of DP proteins and specifically recognizes the E2 recognition site 5'-TTTC[CG]CGC-3'. Directly represses transcription of classical E2F transcription factors such as e2f1. Acts as a regulator of S-phase by recognizing and binding the E2-related site 5'-TTCCCGCC-3' and mediating repression of G1/S-regulated genes. Acts as a promoter of sprouting angiogenesis, possibly by acting as a transcription activator and promoting expression of vegfa. The chain is Transcription factor E2F8 (e2f8) from Danio rerio (Zebrafish).